A 268-amino-acid chain; its full sequence is Putative esterase/lipase 1 (268 aa).

H27 is a catalytic residue. The active-site Charge relay system is S94.

It belongs to the lipase/esterase LIP3/BchO family.

The chain is Putative esterase/lipase 1 from Mycoplasma genitalium (strain ATCC 33530 / DSM 19775 / NCTC 10195 / G37) (Mycoplasmoides genitalium).